A 131-amino-acid chain; its full sequence is Small ribosomal subunit protein uS8 (131 aa).

Belongs to the universal ribosomal protein uS8 family. In terms of assembly, part of the 30S ribosomal subunit. Contacts proteins S5 and S12.

Functionally, one of the primary rRNA binding proteins, it binds directly to 16S rRNA central domain where it helps coordinate assembly of the platform of the 30S subunit. The polypeptide is Small ribosomal subunit protein uS8 (Campylobacter fetus subsp. fetus (strain 82-40)).